A 535-amino-acid chain; its full sequence is CTP synthase (535 aa).

The amidoligase domain stretch occupies residues 1-270; it reads MSKNTKYVFV…DRLVCEKLGL (270 aa). CTP is bound at residue serine 16. Residue serine 16 participates in UTP binding. 17-22 contacts ATP; sequence SLGKGI. Tyrosine 57 serves as a coordination point for L-glutamine. Aspartate 74 serves as a coordination point for ATP. Aspartate 74 and glutamate 144 together coordinate Mg(2+). CTP-binding positions include 151 to 153, 191 to 196, and lysine 227; these read DIE and KTKPTQ. UTP-binding positions include 191–196 and lysine 227; that span reads KTKPTQ. In terms of domain architecture, Glutamine amidotransferase type-1 spans 295-535; sequence KIALVGKYVE…GFVGAALNNK (241 aa). Glycine 357 is an L-glutamine binding site. Cysteine 384 serves as the catalytic Nucleophile; for glutamine hydrolysis. L-glutamine-binding positions include 385-388, glutamate 408, and arginine 465; that span reads LGMQ. Residues histidine 510 and glutamate 512 contribute to the active site.

The protein belongs to the CTP synthase family. Homotetramer.

The catalysed reaction is UTP + L-glutamine + ATP + H2O = CTP + L-glutamate + ADP + phosphate + 2 H(+). It carries out the reaction L-glutamine + H2O = L-glutamate + NH4(+). The enzyme catalyses UTP + NH4(+) + ATP = CTP + ADP + phosphate + 2 H(+). Its pathway is pyrimidine metabolism; CTP biosynthesis via de novo pathway; CTP from UDP: step 2/2. Its activity is regulated as follows. Allosterically activated by GTP, when glutamine is the substrate; GTP has no effect on the reaction when ammonia is the substrate. The allosteric effector GTP functions by stabilizing the protein conformation that binds the tetrahedral intermediate(s) formed during glutamine hydrolysis. Inhibited by the product CTP, via allosteric rather than competitive inhibition. Its function is as follows. Catalyzes the ATP-dependent amination of UTP to CTP with either L-glutamine or ammonia as the source of nitrogen. Regulates intracellular CTP levels through interactions with the four ribonucleotide triphosphates. The chain is CTP synthase from Clostridium perfringens (strain ATCC 13124 / DSM 756 / JCM 1290 / NCIMB 6125 / NCTC 8237 / Type A).